Reading from the N-terminus, the 336-residue chain is Glycerol-3-phosphate dehydrogenase [NAD(P)+] (336 aa).

The NADPH site is built by W16 and K109. Sn-glycerol 3-phosphate is bound by residues K109, G137, and S139. NADPH is bound at residue A141. Sn-glycerol 3-phosphate-binding residues include K192, D245, S255, R256, and N257. K192 functions as the Proton acceptor in the catalytic mechanism. R256 is a binding site for NADPH. NADPH contacts are provided by V280 and E282.

It belongs to the NAD-dependent glycerol-3-phosphate dehydrogenase family.

It localises to the cytoplasm. It carries out the reaction sn-glycerol 3-phosphate + NAD(+) = dihydroxyacetone phosphate + NADH + H(+). It catalyses the reaction sn-glycerol 3-phosphate + NADP(+) = dihydroxyacetone phosphate + NADPH + H(+). The protein operates within membrane lipid metabolism; glycerophospholipid metabolism. In terms of biological role, catalyzes the reduction of the glycolytic intermediate dihydroxyacetone phosphate (DHAP) to sn-glycerol 3-phosphate (G3P), the key precursor for phospholipid synthesis. This Hyphomonas neptunium (strain ATCC 15444) protein is Glycerol-3-phosphate dehydrogenase [NAD(P)+].